The chain runs to 37 residues: MVEPLLSGIVLGLIPITLAGLFVTAYLQYRRGDQLNL.

The chain crosses the membrane as a helical span at residues 5–25 (LLSGIVLGLIPITLAGLFVTA).

The protein belongs to the PetG family. In terms of assembly, the 4 large subunits of the cytochrome b6-f complex are cytochrome b6, subunit IV (17 kDa polypeptide, PetD), cytochrome f and the Rieske protein, while the 4 small subunits are PetG, PetL, PetM and PetN. The complex functions as a dimer.

Its subcellular location is the plastid. It is found in the chloroplast thylakoid membrane. Its function is as follows. Component of the cytochrome b6-f complex, which mediates electron transfer between photosystem II (PSII) and photosystem I (PSI), cyclic electron flow around PSI, and state transitions. PetG is required for either the stability or assembly of the cytochrome b6-f complex. In Chara vulgaris (Common stonewort), this protein is Cytochrome b6-f complex subunit 5.